The following is a 182-amino-acid chain: Large ribosomal subunit protein uL5 (182 aa).

It belongs to the universal ribosomal protein uL5 family. Part of the 50S ribosomal subunit; part of the 5S rRNA/L5/L18/L25 subcomplex. Contacts the 5S rRNA and the P site tRNA. Forms a bridge to the 30S subunit in the 70S ribosome.

This is one of the proteins that bind and probably mediate the attachment of the 5S RNA into the large ribosomal subunit, where it forms part of the central protuberance. In the 70S ribosome it contacts protein S13 of the 30S subunit (bridge B1b), connecting the 2 subunits; this bridge is implicated in subunit movement. Contacts the P site tRNA; the 5S rRNA and some of its associated proteins might help stabilize positioning of ribosome-bound tRNAs. This chain is Large ribosomal subunit protein uL5, found in Borreliella afzelii (strain PKo) (Borrelia afzelii).